We begin with the raw amino-acid sequence, 181 residues long: Adenine phosphoribosyltransferase (181 aa).

It belongs to the purine/pyrimidine phosphoribosyltransferase family. In terms of assembly, homodimer.

It localises to the cytoplasm. The enzyme catalyses AMP + diphosphate = 5-phospho-alpha-D-ribose 1-diphosphate + adenine. Its pathway is purine metabolism; AMP biosynthesis via salvage pathway; AMP from adenine: step 1/1. Its function is as follows. Catalyzes a salvage reaction resulting in the formation of AMP, that is energically less costly than de novo synthesis. This is Adenine phosphoribosyltransferase from Methylobacterium radiotolerans (strain ATCC 27329 / DSM 1819 / JCM 2831 / NBRC 15690 / NCIMB 10815 / 0-1).